The sequence spans 157 residues: MATELSLSVQYGVADARLPRWRLRRWVQYALAGAAGDGHAGLAGAELGLRLVGLAEGRRLNREFRGRDYATNVLTFEYGTGPDGVARGDIVVCVPVLAREAREQRKTLLDHAAHLTVHGTLHALGYDHIKAGEARRMEALETAVLARMGIADPYLAA.

Residues H118, H122, and H128 each coordinate Zn(2+).

It belongs to the endoribonuclease YbeY family. Requires Zn(2+) as cofactor.

The protein localises to the cytoplasm. Functionally, single strand-specific metallo-endoribonuclease involved in late-stage 70S ribosome quality control and in maturation of the 3' terminus of the 16S rRNA. This Bordetella bronchiseptica (strain ATCC BAA-588 / NCTC 13252 / RB50) (Alcaligenes bronchisepticus) protein is Endoribonuclease YbeY.